Here is a 127-residue protein sequence, read N- to C-terminus: Evasin-4 (127 aa).

An N-terminal signal peptide occupies residues 1–23; it reads MAFKYWFVFAAVLYARQWLSTKC. 4 cysteine pairs are disulfide-bonded: cysteine 50–cysteine 69, cysteine 65–cysteine 112, cysteine 86–cysteine 117, and cysteine 107–cysteine 126. N-linked (GlcNAc...) asparagine glycosylation is found at asparagine 54, asparagine 64, asparagine 70, asparagine 77, asparagine 83, asparagine 106, and asparagine 114.

This sequence belongs to the evasin C8 family. In terms of assembly, monomer.

Its subcellular location is the secreted. Salivary chemokine-binding protein which has chemokine-neutralizing activity and binds to host chemokines CCL1, CCL3, CCL5, CCL7, CCL8, CCL11, CCL14, CCL15, CCL16, CCL17, CCL18, CCL19, CCL21, CCL22, CCL23, CCL24, CCL25 and CCL26 with nanomolar affinity. Binds to CCL3 and CCL5 with 1:1 stoichiometry. Although binding to CCL25 is observed, does not inhibit CCL25-induced chemotaxis. Has been shown to reduce cardiac injury and inflammation in mice through its anti-CCL5 activity. This chain is Evasin-4, found in Rhipicephalus sanguineus (Brown dog tick).